The following is a 242-amino-acid chain: Acetoacetyl-CoA reductase (242 aa).

NADP(+) contacts are provided by residues arginine 12–isoleucine 14 and asparagine 82–threonine 86. Residues aspartate 88 and glutamine 141–glutamine 144 each bind substrate. Tyrosine 147 functions as the Proton acceptor in the catalytic mechanism. Proline 177 to isoleucine 180 is an NADP(+) binding site. A substrate-binding site is contributed by glycine 178 to tyrosine 179.

Belongs to the short-chain dehydrogenases/reductases (SDR) family.

Its subcellular location is the cytoplasm. It carries out the reaction a (3R)-3-hydroxyacyl-CoA + NADP(+) = a 3-oxoacyl-CoA + NADPH + H(+). It participates in biopolymer metabolism; poly-(R)-3-hydroxybutanoate biosynthesis. This chain is Acetoacetyl-CoA reductase (phaB), found in Paracoccus denitrificans.